We begin with the raw amino-acid sequence, 283 residues long: Urease accessory protein UreD (283 aa).

Residues 1–20 form a disordered region; it reads MTQTQPVGTLRLTIDDQGPQ.

This sequence belongs to the UreD family. UreD, UreF and UreG form a complex that acts as a GTP-hydrolysis-dependent molecular chaperone, activating the urease apoprotein by helping to assemble the nickel containing metallocenter of UreC. The UreE protein probably delivers the nickel.

The protein localises to the cytoplasm. Required for maturation of urease via the functional incorporation of the urease nickel metallocenter. The chain is Urease accessory protein UreD from Corynebacterium glutamicum (strain R).